We begin with the raw amino-acid sequence, 458 residues long: Retinoic acid receptor alpha (458 aa).

Positions 1–86 (MASNGGSCPS…PPPLPRIYKP (86 aa)) are modulating. The segment covering 54-68 (TPSPATIETQSTSSE) has biased composition (polar residues). The tract at residues 54-76 (TPSPATIETQSTSSEEIVPSPPS) is disordered. 2 NR C4-type zinc fingers span residues 87–107 (CFVC…CEGC) and 123–147 (CHRD…LQKC). A DNA-binding region (nuclear receptor) is located at residues 87–152 (CFVCQDKSSG…RLQKCFEVGM (66 aa)). Positions 153–182 (SKESVRNDRNKKKKQEAPKQECTESYIITP) are hinge. The NR LBD domain occupies 183–417 (EVEDLVEKVR…PLIQEMLENS (235 aa)). Residues 408–416 (PLIQEMLEN) carry the 9aaTAD motif. The tract at residues 417–458 (SEGLDSLTGQPPRASSLAPPPGSCSPSLSPSSNRSSPTSHSP) is disordered. The span at 440–458 (CSPSLSPSSNRSSPTSHSP) shows a compositional bias: low complexity.

Belongs to the nuclear hormone receptor family. NR1 subfamily. Heterodimer; with an rxr molecule. Binds DNA preferentially as a rar/rxr heterodimer. Expressed in forelimb, in the distal forelimb blastema, kidney, liver and hindlimb blastemal mesenchymal cells.

Its subcellular location is the nucleus. Its function is as follows. Receptor for retinoic acid. Retinoic acid receptors bind as heterodimers to their target response elements in response to their ligands, all-trans or 9-cis retinoic acid, and regulate gene expression in various biological processes. The rar/rxr heterodimers bind to the retinoic acid response elements (RARE) composed of tandem 5'-AGGTCA-3' sites known as DR1-DR5. Retinoic acid signaling appears to be involved in specifying proximal-distal axis in limb regeneration. The sequence is that of Retinoic acid receptor alpha (RARA) from Notophthalmus viridescens (Eastern newt).